An 818-amino-acid polypeptide reads, in one-letter code: Response regulator SSK1 (818 aa).

Positions N611 to G769 constitute a Response regulatory domain. D660 is modified (4-aspartylphosphate).

This sequence belongs to the SSK1 family.

The protein localises to the cytoplasm. Functionally, two-domain response regulator protein in the two-component signal transduction system of the HOG1 pathway. Modulates stress response, melanin biosynthesis and virulence via its regulation of the phosphorylation of HOG1. The chain is Response regulator SSK1 from Verticillium dahliae (strain VdLs.17 / ATCC MYA-4575 / FGSC 10137) (Verticillium wilt).